Consider the following 192-residue polypeptide: uncharacterized protein (192 aa).

Residues 29-160 enclose the Nudix hydrolase domain; sequence HRQAAVLIPI…PLDIYRRGDS (132 aa). The Nudix box signature appears at 67–89; sequence GAVDDTDTSVIAAALREAEEEVA. Mg(2+)-binding residues include glutamate 83 and glutamate 87.

It belongs to the Nudix hydrolase family. PCD1 subfamily. It depends on Mn(2+) as a cofactor. Mg(2+) is required as a cofactor.

In terms of biological role, probably mediates the hydrolysis of some nucleoside diphosphate derivatives. This is an uncharacterized protein from Escherichia coli O7:K1 (strain IAI39 / ExPEC).